The primary structure comprises 63 residues: Arabinogalactan peptide 3 (63 aa).

Residues 1–26 (MASRILYAAAVVAAVAVSSLAGVAYA) form the signal peptide. Residue serine 36 is the site of GPI-anchor amidated serine attachment. The propeptide at 37 to 63 (GAAAVSSSLVAAVLCPAVALLLGNLRQ) is removed in mature form.

The protein belongs to the AG-peptide AGP family. Post-translationally, O-glycosylated on hydroxyprolines; noncontiguous hydroxylproline residues are glycosylated with arabinogalactan. As to expression, expressed in roots, stems, leaves, flowers and seeds.

The protein localises to the vacuole. Its subcellular location is the aleurone grain membrane. In terms of biological role, proteoglycan that seems to be implicated in diverse developmental roles such as differentiation, cell-cell recognition, embryogenesis and programmed cell death. The polypeptide is Arabinogalactan peptide 3 (AGPEP3) (Oryza sativa subsp. japonica (Rice)).